The primary structure comprises 473 residues: Photosystem II CP43 reaction center protein (473 aa).

Residues 1–14 (MKILYSLRRFYHVE) constitute a propeptide that is removed on maturation. N-acetylthreonine is present on Thr15. Thr15 bears the Phosphothreonine mark. 5 helical membrane-spanning segments follow: residues 69–93 (LFEV…PHLA), 134–155 (LLGP…KDRN), 178–200 (KALY…RKIT), 255–275 (KPFA…LSYS), and 291–312 (WFNN…ASQA). Position 367 (Glu367) interacts with [CaMn4O5] cluster. The helical transmembrane segment at 447 to 471 (RARAAAAGFEKGIDRDLEPVLYMNP) threads the bilayer.

Belongs to the PsbB/PsbC family. PsbC subfamily. As to quaternary structure, PSII is composed of 1 copy each of membrane proteins PsbA, PsbB, PsbC, PsbD, PsbE, PsbF, PsbH, PsbI, PsbJ, PsbK, PsbL, PsbM, PsbT, PsbX, PsbY, PsbZ, Psb30/Ycf12, at least 3 peripheral proteins of the oxygen-evolving complex and a large number of cofactors. It forms dimeric complexes. Binds multiple chlorophylls and provides some of the ligands for the Ca-4Mn-5O cluster of the oxygen-evolving complex. It may also provide a ligand for a Cl- that is required for oxygen evolution. PSII binds additional chlorophylls, carotenoids and specific lipids. serves as cofactor.

It localises to the plastid. The protein localises to the chloroplast thylakoid membrane. Functionally, one of the components of the core complex of photosystem II (PSII). It binds chlorophyll and helps catalyze the primary light-induced photochemical processes of PSII. PSII is a light-driven water:plastoquinone oxidoreductase, using light energy to abstract electrons from H(2)O, generating O(2) and a proton gradient subsequently used for ATP formation. The polypeptide is Photosystem II CP43 reaction center protein (Lolium perenne (Perennial ryegrass)).